Here is a 388-residue protein sequence, read N- to C-terminus: Tumor protein p53-inducible protein 13 (388 aa).

The N-terminal stretch at 1–27 is a signal peptide; sequence MVPPPPPPSRLLLVALVGLLSLHEVVA. The Extracellular segment spans residues 28-304; it reads EPAEEAGTRC…ARGPTPRTEE (277 aa). The chain crosses the membrane as a helical span at residues 305–325; it reads AAWAAMALTFLLVLLTLATLC. The Cytoplasmic portion of the chain corresponds to 326–388; that stretch reads TRLHRNFRRS…DSGPDSESSD (63 aa). Positions 361-372 are enriched in basic residues; sequence PSRRIKRSRRRP. The disordered stretch occupies residues 361–388; it reads PSRRIKRSRRRPLLPPTPDSGPDSESSD.

It localises to the cell membrane. It is found in the cytoplasm. Functionally, may act as a tumor suppressor. Inhibits tumor cell growth, when overexpressed. The chain is Tumor protein p53-inducible protein 13 (Tp53i13) from Rattus norvegicus (Rat).